A 454-amino-acid chain; its full sequence is Protoheme IX farnesyltransferase 1 (454 aa).

A unknown region spans residues 1–186 (MRTTGFSGLL…AYFELTKPRL (186 aa)). A run of 4 helical transmembrane segments spans residues 9–29 (LLSA…TAAL), 59–79 (GVAA…WSET), 87–107 (LALA…VATG), and 113–133 (LHLF…AWHL). The segment at 137–164 (TGSDDAPESPPELAPPVDEEPAATEQPA) is disordered. Transmembrane regions (helical) follow at residues 186 to 206 (LMWL…TPTV), 209 to 229 (VVFT…FNHV), 251 to 271 (VPVA…LWAF), 276 to 296 (LLAA…YTLI), 300 to 320 (NTVQ…LIGY), 321 to 341 (AAVT…IFLW), 377 to 397 (HIVF…AVTD), 398 to 418 (LGWL…WAVV), and 433 to 453 (FHAS…DSLA). Residues 187 to 451 (MWLLCLVAGA…LVLVAILIDS (265 aa)) are protoheme IX prenyltransferase.

This sequence in the C-terminal section; belongs to the UbiA prenyltransferase family. Protoheme IX farnesyltransferase subfamily.

It localises to the cell membrane. The catalysed reaction is heme b + (2E,6E)-farnesyl diphosphate + H2O = Fe(II)-heme o + diphosphate. The protein operates within porphyrin-containing compound metabolism; heme O biosynthesis; heme O from protoheme: step 1/1. In terms of biological role, converts heme B (protoheme IX) to heme O by substitution of the vinyl group on carbon 2 of heme B porphyrin ring with a hydroxyethyl farnesyl side group. The polypeptide is Protoheme IX farnesyltransferase 1 (ctaB1) (Natronomonas pharaonis (strain ATCC 35678 / DSM 2160 / CIP 103997 / JCM 8858 / NBRC 14720 / NCIMB 2260 / Gabara) (Halobacterium pharaonis)).